The chain runs to 750 residues: Photosystem I P700 chlorophyll a apoprotein A1 (750 aa).

Transmembrane regions (helical) follow at residues 70 to 93, 156 to 179, 195 to 219, 291 to 309, 346 to 369, 385 to 411, 433 to 455, and 531 to 549; these read VFSAHFGQLSIIFLWLSGMYFHGA, LYCTAIGALVFAALMLFAGWFHYH, LNHHLAGLLGLGSLSWAGHQVHVSL, IAHHHLAIAILFLLAGHMY, WHAQLSLNLAMLGSLTIVVAHHMY, LSLFTHHMWIGGFLIVGAAAHAAIFMV, AIISHLNWVCIFLGFHSFGLYIH, and FLVHHIHAFTIHVTVLILL. [4Fe-4S] cluster-binding residues include Cys573 and Cys582. Transmembrane regions (helical) follow at residues 589–610 and 664–686; these read HVFLGLFWMYNAISVVIFHFSW and LSAYGLFFLGAHFVWAFSLMFLF. His675 contacts chlorophyll a'. 2 residues coordinate chlorophyll a: Met683 and Tyr691. Trp692 serves as a coordination point for phylloquinone. Residues 724–744 traverse the membrane as a helical segment; sequence AVGVTHYLLGGIATTWAFFLA.

This sequence belongs to the PsaA/PsaB family. In terms of assembly, the PsaA/B heterodimer binds the P700 chlorophyll special pair and subsequent electron acceptors. PSI consists of a core antenna complex that captures photons, and an electron transfer chain that converts photonic excitation into a charge separation. The eukaryotic PSI reaction center is composed of at least 11 subunits. P700 is a chlorophyll a/chlorophyll a' dimer, A0 is one or more chlorophyll a, A1 is one or both phylloquinones and FX is a shared 4Fe-4S iron-sulfur center. is required as a cofactor.

It is found in the plastid. It localises to the chloroplast thylakoid membrane. It carries out the reaction reduced [plastocyanin] + hnu + oxidized [2Fe-2S]-[ferredoxin] = oxidized [plastocyanin] + reduced [2Fe-2S]-[ferredoxin]. PsaA and PsaB bind P700, the primary electron donor of photosystem I (PSI), as well as the electron acceptors A0, A1 and FX. PSI is a plastocyanin-ferredoxin oxidoreductase, converting photonic excitation into a charge separation, which transfers an electron from the donor P700 chlorophyll pair to the spectroscopically characterized acceptors A0, A1, FX, FA and FB in turn. Oxidized P700 is reduced on the lumenal side of the thylakoid membrane by plastocyanin. The sequence is that of Photosystem I P700 chlorophyll a apoprotein A1 from Arabis hirsuta (Hairy rock-cress).